Reading from the N-terminus, the 440-residue chain is MVPEPGPTANSTPAWGAGPPSAPGGSGWVAAALCVVIALTAAANSLLIALICTQPALRNTSNFFLVSLFTSDLMVGLVVMPPAMLNALYGRWVLARGLCLLWTAFDVMCCSASILNLCLISLDRYLLILSPLRYKLRMTPLRALALVLGAWSLAALASFLPLLLGWHELGHARPPVPGQCRLLASLPFVLVASGLTFFLPSGAICFTYCRILLAARKQAVQVASLTTGMASQASETLQVPRTPRPGVESADSRRLATKHSRKALKASLTLGILLGMFFVTWLPFFVANIVQAVCDCISPGLFDVLTWLGYCNSTMNPIIYPLFMRDFKRALGRFLPCPRCPRERQASLASPSLRTSHSGPRPGLSLQQVLPLPLPPDSDSDSDAGSGGSSGLRLTAQLLLPGEATQDPPLPTRAAAAVNFFNIDPAEPELRPHPLGIPTN.

At 1–27 (MVPEPGPTANSTPAWGAGPPSAPGGSG) the chain is on the extracellular side. Residues 28–52 (WVAAALCVVIALTAAANSLLIALIC) form a helical membrane-spanning segment. Residues 53–62 (TQPALRNTSN) are Cytoplasmic-facing. A helical transmembrane segment spans residues 63–88 (FFLVSLFTSDLMVGLVVMPPAMLNAL). The Extracellular segment spans residues 89-96 (YGRWVLAR). Residues 97-122 (GLCLLWTAFDVMCCSASILNLCLISL) form a helical membrane-spanning segment. Cys-99 and Cys-180 are oxidised to a cystine. Asp-106 lines the serotonin pocket. Topologically, residues 123 to 142 (DRYLLILSPLRYKLRMTPLR) are cytoplasmic. The chain crosses the membrane as a helical span at residues 143–167 (ALALVLGAWSLAALASFLPLLLGWH). The Extracellular segment spans residues 168 to 185 (ELGHARPPVPGQCRLLAS). Residues 186–209 (LPFVLVASGLTFFLPSGAICFTYC) form a helical membrane-spanning segment. Over 210 to 266 (RILLAARKQAVQVASLTTGMASQASETLQVPRTPRPGVESADSRRLATKHSRKALKA) the chain is Cytoplasmic. The helical transmembrane segment at 267 to 293 (SLTLGILLGMFFVTWLPFFVANIVQAV) threads the bilayer. Position 288 (Asn-288) interacts with serotonin. The Extracellular portion of the chain corresponds to 294–299 (CDCISP). Residues 300–323 (GLFDVLTWLGYCNSTMNPIIYPLF) traverse the membrane as a helical segment. Residues 324-440 (MRDFKRALGR…RPHPLGIPTN (117 aa)) are Cytoplasmic-facing. Residues 346 to 392 (ASLASPSLRTSHSGPRPGLSLQQVLPLPLPPDSDSDSDAGSGGSSGL) are disordered. Over residues 347 to 358 (SLASPSLRTSHS) the composition is skewed to polar residues. Residues 362 to 371 (PGLSLQQVLP) are compositionally biased toward low complexity.

Belongs to the G-protein coupled receptor 1 family. Interacts with MTOR, RPTOR and NF1. Interacts with CDK5. In terms of tissue distribution, expressed in several human brain regions, most prominently in the caudate nucleus.

Its subcellular location is the cell membrane. Its function is as follows. G-protein coupled receptor for 5-hydroxytryptamine (serotonin), a biogenic hormone that functions as a neurotransmitter, a hormone and a mitogen. Also has a high affinity for tricyclic psychotropic drugs. Ligand binding causes a conformation change that triggers signaling via guanine nucleotide-binding proteins (G proteins) and modulates the activity of downstream effectors. HTR6 is coupled to G(s) G alpha proteins and mediates activation of adenylate cyclase activity. Controls pyramidal neurons migration during corticogenesis, through the regulation of CDK5 activity. Is an activator of mTOR signaling. The polypeptide is 5-hydroxytryptamine receptor 6 (Homo sapiens (Human)).